The chain runs to 206 residues: N-(5'-phosphoribosyl)anthranilate isomerase (206 aa).

Belongs to the TrpF family.

It catalyses the reaction N-(5-phospho-beta-D-ribosyl)anthranilate = 1-(2-carboxyphenylamino)-1-deoxy-D-ribulose 5-phosphate. It functions in the pathway amino-acid biosynthesis; L-tryptophan biosynthesis; L-tryptophan from chorismate: step 3/5. The protein is N-(5'-phosphoribosyl)anthranilate isomerase of Pseudomonas putida (strain GB-1).